Here is a 226-residue protein sequence, read N- to C-terminus: ATP synthase subunit a (226 aa).

6 helical membrane passes run 17 to 37 (FSYFFHIGLVALIAVIVAMMA), 79 to 99 (LVATLGIIVFFSNIIGILPGF), 105 to 125 (SLNLTLSLAIIVFVYYHFEGI), 134 to 154 (FAHFMGPIKLLAPLMFPIEIV), 176 to 196 (LFLMVILALVPYIAPLPAYVL), and 199 to 219 (FMAFLQAFIFMILTYVYLAGA).

Belongs to the ATPase A chain family. In terms of assembly, F-type ATPases have 2 components, CF(1) - the catalytic core - and CF(0) - the membrane proton channel. CF(1) has five subunits: alpha(3), beta(3), gamma(1), delta(1), epsilon(1). CF(0) has three main subunits: a(1), b(2) and c(9-12). The alpha and beta chains form an alternating ring which encloses part of the gamma chain. CF(1) is attached to CF(0) by a central stalk formed by the gamma and epsilon chains, while a peripheral stalk is formed by the delta and b chains.

The protein resides in the cell inner membrane. In terms of biological role, key component of the proton channel; it plays a direct role in the translocation of protons across the membrane. In Campylobacter jejuni subsp. doylei (strain ATCC BAA-1458 / RM4099 / 269.97), this protein is ATP synthase subunit a.